A 171-amino-acid polypeptide reads, in one-letter code: Translationally-controlled tumor protein homolog (171 aa).

The TCTP domain occupies 1–171 (MIIYRDCISQ…FKDGLEMEKC (171 aa)).

It belongs to the TCTP family. In terms of tissue distribution, expressed by the venom gland.

The protein resides in the secreted. Functionally, venom protein that causes edema, enhances vascular permeability and is likely related to the inflammatory activity of the venom. The protein is Translationally-controlled tumor protein homolog of Micrurus fulvius (Eastern coral snake).